An 88-amino-acid polypeptide reads, in one-letter code: Small ribosomal subunit protein uS17c (88 aa).

The protein belongs to the universal ribosomal protein uS17 family. In terms of assembly, part of the 30S ribosomal subunit.

The protein resides in the plastid. Its subcellular location is the cyanelle. In terms of biological role, one of the primary rRNA binding proteins, it binds specifically to the 5'-end of 16S ribosomal RNA. This Cyanophora paradoxa protein is Small ribosomal subunit protein uS17c (rps17).